Consider the following 150-residue polypeptide: Endoribonuclease YbeY (150 aa).

The Zn(2+) site is built by H115, H119, and H125.

This sequence belongs to the endoribonuclease YbeY family. Zn(2+) is required as a cofactor.

It is found in the cytoplasm. In terms of biological role, single strand-specific metallo-endoribonuclease involved in late-stage 70S ribosome quality control and in maturation of the 3' terminus of the 16S rRNA. The protein is Endoribonuclease YbeY of Aquifex aeolicus (strain VF5).